The primary structure comprises 613 residues: Thioredoxin reductase 1, cytoplasmic (613 aa).

Residues 58-121 (AVLPASRPSK…LPTMNGSKDP (64 aa)) are disordered. A compositionally biased stretch (polar residues) spans 65–74 (PSKTLPSSSQ). FAD-binding positions include 136-137 (SG), 156-157 (DF), 172-173 (TC), and 177-181 (GCIPK). Cysteine 173 and cysteine 178 are joined by a disulfide. Lysine 182 carries the N6-succinyllysine modification. Tyrosine 245 is subject to Phosphotyrosine. FAD contacts are provided by residues 245–246 (YG) and threonine 275. Residues arginine 280, 312 to 318 (ASYVALE), 335 to 336 (RS), arginine 340, 340 to 342 (RGF), 406 to 407 (GR), and lysine 429 each bind NADP(+). Tyrosine 314 lines the FAD pocket. Residues aspartate 448, 455–457 (ELT), and histidine 586 each bind FAD. An NADP(+)-binding site is contributed by glutamate 455. The active-site Proton acceptor is histidine 586. The segment at residues 611-612 (CU) is a cross-link (cysteinyl-selenocysteine (Cys-Sec)). Position 612 (selenocysteine 612) is a non-standard amino acid, selenocysteine.

The protein belongs to the class-I pyridine nucleotide-disulfide oxidoreductase family. In terms of assembly, homodimer. FAD is required as a cofactor. In terms of processing, ISGylated.

Its subcellular location is the cytoplasm. The catalysed reaction is [thioredoxin]-dithiol + NADP(+) = [thioredoxin]-disulfide + NADPH + H(+). It catalyses the reaction H2O2 + NADPH + H(+) = NADP(+) + 2 H2O. In terms of biological role, reduces disulfideprotein thioredoxin (Trx) to its dithiol-containing form. Homodimeric flavoprotein involved in the regulation of cellular redox reactions, growth and differentiation. Contains a selenocysteine residue at the C-terminal active site that is essential for catalysis. Also has reductase activity on hydrogen peroxide (H2O2). This is Thioredoxin reductase 1, cytoplasmic from Mus musculus (Mouse).